We begin with the raw amino-acid sequence, 132 residues long: Fluoride-specific ion channel FluC 2 (132 aa).

A run of 4 helical transmembrane segments spans residues 12–32, 41–61, 65–85, and 96–116; these read LTEL…RWQL, LLVN…PVAP, LLVG…MLAA, and AALG…ALGF. Residues Gly-73 and Thr-76 each contribute to the Na(+) site.

This sequence belongs to the fluoride channel Fluc/FEX (TC 1.A.43) family.

It is found in the cell inner membrane. The enzyme catalyses fluoride(in) = fluoride(out). Na(+) is not transported, but it plays an essential structural role and its presence is essential for fluoride channel function. Fluoride-specific ion channel. Important for reducing fluoride concentration in the cell, thus reducing its toxicity. The sequence is that of Fluoride-specific ion channel FluC 2 from Parasynechococcus marenigrum (strain WH8102).